The chain runs to 144 residues: Large ribosomal subunit protein uL15 (144 aa).

Positions 1–52 (MRLNTLSPAEGAKHAPKRVGRGIGSGLGKTGGRGHKGQKSRSGGGVRRGFEG) are disordered. Over residues 21 to 31 (RGIGSGLGKTG) the composition is skewed to gly residues.

Belongs to the universal ribosomal protein uL15 family. Part of the 50S ribosomal subunit.

In terms of biological role, binds to the 23S rRNA. The protein is Large ribosomal subunit protein uL15 of Buchnera aphidicola subsp. Acyrthosiphon kondoi (Acyrthosiphon kondoi symbiotic bacterium).